Consider the following 205-residue polypeptide: Holliday junction resolvase RecU (205 aa).

Positions 83, 85, 98, and 117 each coordinate Mg(2+).

The protein belongs to the RecU family. Mg(2+) is required as a cofactor.

The protein resides in the cytoplasm. It carries out the reaction Endonucleolytic cleavage at a junction such as a reciprocal single-stranded crossover between two homologous DNA duplexes (Holliday junction).. Its function is as follows. Endonuclease that resolves Holliday junction intermediates in genetic recombination. Cleaves mobile four-strand junctions by introducing symmetrical nicks in paired strands. Promotes annealing of linear ssDNA with homologous dsDNA. Required for DNA repair, homologous recombination and chromosome segregation. In Streptococcus suis (strain 98HAH33), this protein is Holliday junction resolvase RecU.